We begin with the raw amino-acid sequence, 352 residues long: Photosystem II protein D1 (352 aa).

Thr-2 carries the N-acetylthreonine modification. Thr-2 carries the post-translational modification Phosphothreonine. Transmembrane regions (helical) follow at residues 29-46 (YIGWFGVIMIPCLLTATS), 118-133 (HFLLGVYCYMGREWEL), and 142-156 (WIAVAYSAPVAAASA). His-118 serves as a coordination point for chlorophyll a. Tyr-126 is a binding site for pheophytin a. [CaMn4O5] cluster is bound by residues Asp-170 and Glu-189. A helical membrane pass occupies residues 197 to 218 (FHMLGVAGVFGGSLFSAMHGSL). Position 198 (His-198) interacts with chlorophyll a. A quinone-binding positions include His-215 and 264-265 (SF). His-215 provides a ligand contact to Fe cation. His-272 contributes to the Fe cation binding site. Residues 274–288 (FLAAWPVIGIWFTAL) traverse the membrane as a helical segment. Positions 332, 333, 342, and 344 each coordinate [CaMn4O5] cluster. Positions 345–352 (STNSSSNN) are excised as a propeptide.

It belongs to the reaction center PufL/M/PsbA/D family. PSII is composed of 1 copy each of membrane proteins PsbA, PsbB, PsbC, PsbD, PsbE, PsbF, PsbH, PsbI, PsbJ, PsbK, PsbL, PsbM, PsbT, PsbX, PsbY, PsbZ, Psb30/Ycf12, at least 3 peripheral proteins of the oxygen-evolving complex and a large number of cofactors. It forms dimeric complexes. The cofactor is The D1/D2 heterodimer binds P680, chlorophylls that are the primary electron donor of PSII, and subsequent electron acceptors. It shares a non-heme iron and each subunit binds pheophytin, quinone, additional chlorophylls, carotenoids and lipids. D1 provides most of the ligands for the Mn4-Ca-O5 cluster of the oxygen-evolving complex (OEC). There is also a Cl(-1) ion associated with D1 and D2, which is required for oxygen evolution. The PSII complex binds additional chlorophylls, carotenoids and specific lipids.. Post-translationally, tyr-161 forms a radical intermediate that is referred to as redox-active TyrZ, YZ or Y-Z. C-terminally processed by CTPA; processing is essential to allow assembly of the oxygen-evolving complex and thus photosynthetic growth.

It localises to the plastid. The protein resides in the chloroplast thylakoid membrane. It catalyses the reaction 2 a plastoquinone + 4 hnu + 2 H2O = 2 a plastoquinol + O2. Functionally, this is one of the two reaction center proteins of photosystem II. Its function is as follows. Photosystem II (PSII) is a light-driven water:plastoquinone oxidoreductase that uses light energy to abstract electrons from H(2)O, generating O(2) and a proton gradient subsequently used for ATP formation. It consists of a core antenna complex that captures photons, and an electron transfer chain that converts photonic excitation into a charge separation. The D1/D2 (PsbA/PsbD) reaction center heterodimer binds P680, the primary electron donor of PSII as well as several subsequent electron acceptors. In Chlamydomonas reinhardtii (Chlamydomonas smithii), this protein is Photosystem II protein D1.